The primary structure comprises 522 residues: Cytochrome P450 714C2 (522 aa).

Over 1 to 11 the chain is Lumenal; it reads MELFSSQQWLA. A helical; Signal-anchor for type III membrane protein transmembrane segment spans residues 12-32; the sequence is LLPPIILCILLFSYVYIILWL. Topologically, residues 33 to 522 are cytoplasmic; that stretch reads RPERLRQKLR…KGVPLIFREL (490 aa). Heme is bound at residue Cys-470.

It belongs to the cytochrome P450 family. Requires heme as cofactor.

Its subcellular location is the membrane. Its function is as follows. Probably not involved in gibberellin metabolism since over-expression of CYP714C2 in a heterologous system does not induce semi-dwarfism. The sequence is that of Cytochrome P450 714C2 (CYP714C2) from Oryza sativa subsp. japonica (Rice).